The following is a 503-amino-acid chain: Maturase K (503 aa).

It belongs to the intron maturase 2 family. MatK subfamily.

It is found in the plastid. The protein resides in the chloroplast. Usually encoded in the trnK tRNA gene intron. Probably assists in splicing its own and other chloroplast group II introns. The polypeptide is Maturase K (Purshia tridentata (Antelope bitterbrush)).